The primary structure comprises 207 residues: NADH-quinone oxidoreductase subunit C (207 aa).

The protein belongs to the complex I 30 kDa subunit family. NDH-1 is composed of 14 different subunits. Subunits NuoB, C, D, E, F, and G constitute the peripheral sector of the complex.

Its subcellular location is the cell inner membrane. It catalyses the reaction a quinone + NADH + 5 H(+)(in) = a quinol + NAD(+) + 4 H(+)(out). In terms of biological role, NDH-1 shuttles electrons from NADH, via FMN and iron-sulfur (Fe-S) centers, to quinones in the respiratory chain. The immediate electron acceptor for the enzyme in this species is believed to be ubiquinone. Couples the redox reaction to proton translocation (for every two electrons transferred, four hydrogen ions are translocated across the cytoplasmic membrane), and thus conserves the redox energy in a proton gradient. This is NADH-quinone oxidoreductase subunit C from Jannaschia sp. (strain CCS1).